The primary structure comprises 3788 residues: Lysosomal-trafficking regulator (3788 aa).

Disordered regions lie at residues 148–180 and 198–217; these read KSTHRYSVRDARKTQLSTSDSEGNSDEKSTVVS and EGHLVAKPDPSATKEQVLSD. The residue at position 164 (Ser-164) is a Phosphoserine. Thr-165 bears the Phosphothreonine mark. Ser-166 bears the Phosphoserine mark. One copy of the WD 1 repeat lies at 662–700; it reads GPTSGLPSPSYRFQGILPSSGSEDLLWKWDALEAYQSFV. Disordered regions lie at residues 1169 to 1196, 1213 to 1240, and 1482 to 1519; these read LGPGDAVTEKSHPSEEELLSQPGDFSEE, GYEADSESNPEDVDTQDDGVELNPEAEG, and ESAAERGKRVKKRNKPSVLEDSSFEGAEGDRPEVTESI. The segment covering 1213–1232 has biased composition (acidic residues); that stretch reads GYEADSESNPEDVDTQDDGV. Ser-1503 and Ser-1504 each carry phosphoserine. A WD 2 repeat occupies 1576-1620; the sequence is SQENIFFPSKWQHLVLTYIQHPQGKKNVHGEISIWVSGQRKTDVI. Phosphoserine occurs at positions 2099, 2118, 2203, 2207, and 2254. Residues 2177–2221 are disordered; the sequence is ANGVSRGSPRFPRARVDHKDVGTEPRSDDDSPGDESYPRRPDNLK. Over residues 2190–2205 the composition is skewed to basic and acidic residues; sequence ARVDHKDVGTEPRSDD. Disordered stretches follow at residues 2556–2581 and 2659–2681; these read HDSESPVHSPSAHRHSVPPKRRSIAG and NTSQSKTSVSQTEISEEDMHHEQ. The segment covering 2566 to 2578 has biased composition (basic residues); that stretch reads SAHRHSVPPKRRS. Over residues 2659 to 2671 the composition is skewed to polar residues; it reads NTSQSKTSVSQTE. The BEACH-type PH domain maps to 2996 to 3102; it reads AASESIRVNR…VRDDVYQSIL (107 aa). One can recognise a BEACH domain in the interval 3126–3409; sequence QITNFEYLTH…QLFHTAHASR (284 aa). WD repeat units follow at residues 3550-3589, 3601-3640, 3643-3686, 3687-3731, and 3736-3775; these read SQQHQVTSCAWVPDSCQLFTGSKCGVITAYTNRLTSSTPS, GHTEEITGLCVCKPYSVMISVSRDGTCIVWDLNRLCYVQS, GHKS…VGHV, HCRE…PVRE, and KSNKPIISLTFSCDGHHLYTANSEGTVIAWCRKDQQRVKL.

As to quaternary structure, interacts with CPAP, LIP8 and ZNF521. In terms of tissue distribution, expressed in the heart, lung, liver, spleen, brain and in different immune cell types (purified B and T lymphocytes, bone marrow-derived macrophages and dendritic cells).

It localises to the cytoplasm. Its function is as follows. Adapter protein that regulates and/or fission of intracellular vesicles such as lysosomes. Might regulate trafficking of effectors involved in exocytosis. In cytotoxic T-cells and natural killer (NK) cells, has role in the regulation of size, number and exocytosis of lytic granules. In macrophages and dendritic cells, regulates phagosome maturation by controlling the conversion of early phagosomal compartments into late phagosomes. In macrophages and dendritic cells, specifically involved in TLR3- and TLR4-induced production of pro-inflammatory cytokines by regulating the endosomal TLR3- TICAM1/TRIF and TLR4- TICAM1/TRIF signaling pathways. The protein is Lysosomal-trafficking regulator (Lyst) of Mus musculus (Mouse).